The primary structure comprises 609 residues: MFDAKKFLADVSHEPGVYRMYDDKDQVIYVGKAKDLKKRLSSYFRKNLSSKKTEALVASIHHIDTMLTSSETEALLLEHNFIKLYQPRYNVLLRDDKSYPFILLTKERHPRITSYRGSKKFAGEYFGPYPHAGAVRETLSLLQKLFPVRQCENSVYSNRSRPCLQYQIGRCSAPCVQGYVSDEEYNQQVELARLFLQGKDQQVLDYLIGKMEQASRNLDFEQAARYRDQIQAVRSVIEKQFVSNERLDDMDIMSIAYQHGLACVQVMFIRQGKVLGNRSYFPKVPANTDLSELTETFVGQFYLQGHQGRSIPNSIIVDRQLAEKSELEQLLTEQAGRKVTIQESVKGDKSKYLQLAQVNAKAALNVQLKQSSRMSERYQALCDLLNLPEIKRMECFDISHTMGNQTVASCVVFNQEGPLKSDYRRFNIEGITGGDDYAAMEQALQKRYERDLEEDKIPDIIFIDGGKGQLNRALNVFQHLQVKWDKNRPHLIGVAKGVDRRAGQEVLIISKQDREIHLPDDSLALHLIQHIRDESHNHAISGHRKKRQKAFTQSGLETIEGVGAKRRQALLKYLGGLQGVKKATLDEIASVPGISLKLAETIFETLKND.

Positions 13–91 constitute a GIY-YIG domain; the sequence is HEPGVYRMYD…IKLYQPRYNV (79 aa). The region spanning 201 to 236 is the UVR domain; that stretch reads QQVLDYLIGKMEQASRNLDFEQAARYRDQIQAVRSV.

It belongs to the UvrC family. In terms of assembly, interacts with UvrB in an incision complex.

It is found in the cytoplasm. Functionally, the UvrABC repair system catalyzes the recognition and processing of DNA lesions. UvrC both incises the 5' and 3' sides of the lesion. The N-terminal half is responsible for the 3' incision and the C-terminal half is responsible for the 5' incision. This chain is UvrABC system protein C, found in Haemophilus influenzae (strain 86-028NP).